The chain runs to 403 residues: FAD-dependent monooxygenase tazP (403 aa).

The FAD site is built by glycine 75, arginine 144, aspartate 354, and alanine 367.

Belongs to the paxM FAD-dependent monooxygenase family. Requires FAD as cofactor.

Its pathway is secondary metabolite biosynthesis. Its function is as follows. FAD-dependent monooxygenase; part of the gene cluster that mediates the biosynthesis of azaterrilone A and other azaphilones, a class of fungal metabolites characterized by a highly oxygenated pyrano-quinone bicyclic core and exhibiting a broad range of bioactivities. The first step of the pathway begins with the non-reducing polyketide synthase tazA that assembles one acetyl-CoA starter unit, five malonyl-CoA units, and catalyzes a series of Claisen condensations, methylation, PT-mediated cyclization, and finally releases the first hexaketide precursor through the R-domain. The tazA product then undergoes reduction on its terminal ketone and the following pyran-ring formation by yet undetermined enzyme(s). Dehydration and enoyl reduction, possibly involving the trans-enoyl reductase tazE leads to the next intermediate. TazD is predicted as an acetyltransferase and might catalyze the acetylation steps leading to the synthesis of azaterrilone A. Azaterrilone A is not the final product of the taz pathway and both the highly reducing polyketide synthase tazB and the dual enzyme tazHJ catalyze late steps of the pathway, leading to the production of the 2 final stereoisomers that contain additional polyketide modification whose structures have still to be determined. The sequence is that of FAD-dependent monooxygenase tazP from Aspergillus terreus (strain NIH 2624 / FGSC A1156).